The sequence spans 498 residues: Death-associated inhibitor of apoptosis 2 (498 aa).

BIR repeat units follow at residues Arg-12–Leu-77, Arg-116–Gln-180, and Arg-215–Leu-280. Zn(2+) contacts are provided by Cys-249, Cys-252, His-269, and Cys-276. The RING-type zinc finger occupies Cys-451–Arg-486.

This sequence belongs to the IAP family. Interacts with the caspase Strica. Interacts (via BIR2 domain) with rpr and grim. Interacts (via the BIR2 and BIR3 domains) with hid. Interacts (via BIR3 domain) with Drice. Interacts with Dredd; likely to bind Dredd simultaneously with Fadd to form a trimeric complex. In terms of processing, caspase-dependent cleavage is required for suppression of Drice-mediated cell death. As to expression, expressed in both principal and stellar cells of the Malphigian tubules.

The protein localises to the nucleus. Its subcellular location is the cytoplasm. Functionally, required for activation of NF-kappaB transcription factors in the immune deficiency (Imd) signaling cascade which is essential for innate immune responses upon infection by Gram-negative bacteria. Promotes cytoplasmic cleavage of Rel and its translocation to the nucleus where it drives expression of antimicrobial peptides. Binds, polyubiquitinates and activates Dredd which is required for Rel-mediated induction of antimicrobial peptides. Anti-apoptotic protein which binds, ubiquitinates and inactivates the effector caspase Drice. Suppresses rpr and hid-dependent cell death in the eye. However, has also been shown to have little, if any, role in the regulation of the canonical caspase-dependent apoptosis pathway. Plays a role in regulating the expression of ion channels. The polypeptide is Death-associated inhibitor of apoptosis 2 (Diap2) (Drosophila melanogaster (Fruit fly)).